The chain runs to 557 residues: Membrane protein insertase YidC (557 aa).

A run of 3 helical transmembrane segments spans residues 371–391 (WGWSIILLTILIKLVFFPLSA), 437–457 (LGGCLPVVIQIPVFISLYWVL), and 515–535 (PIVFSVMFFFFPAGLVLYWVV).

The protein belongs to the OXA1/ALB3/YidC family. Type 1 subfamily. In terms of assembly, interacts with the Sec translocase complex via SecD. Specifically interacts with transmembrane segments of nascent integral membrane proteins during membrane integration.

Its subcellular location is the cell inner membrane. In terms of biological role, required for the insertion and/or proper folding and/or complex formation of integral membrane proteins into the membrane. Involved in integration of membrane proteins that insert both dependently and independently of the Sec translocase complex, as well as at least some lipoproteins. Aids folding of multispanning membrane proteins. The chain is Membrane protein insertase YidC from Polynucleobacter necessarius subsp. necessarius (strain STIR1).